The primary structure comprises 322 residues: GTP 3',8-cyclase (322 aa).

Positions 5–217 constitute a Radical SAM core domain; that stretch reads SYGRVIDYLR…NIIAQKYSFK (213 aa). A GTP-binding site is contributed by arginine 14. Residues cysteine 21 and cysteine 25 each coordinate [4Fe-4S] cluster. S-adenosyl-L-methionine is bound at residue tyrosine 27. Cysteine 28 provides a ligand contact to [4Fe-4S] cluster. Arginine 64 contributes to the GTP binding site. Residue glycine 68 participates in S-adenosyl-L-methionine binding. Threonine 95 serves as a coordination point for GTP. An S-adenosyl-L-methionine-binding site is contributed by serine 119. Lysine 155 is a binding site for GTP. Methionine 189 is a binding site for S-adenosyl-L-methionine. [4Fe-4S] cluster-binding residues include cysteine 249 and cysteine 252. 254–256 serves as a coordination point for GTP; that stretch reads RIR. Residue cysteine 266 participates in [4Fe-4S] cluster binding.

Belongs to the radical SAM superfamily. MoaA family. Monomer and homodimer. It depends on [4Fe-4S] cluster as a cofactor.

It carries out the reaction GTP + AH2 + S-adenosyl-L-methionine = (8S)-3',8-cyclo-7,8-dihydroguanosine 5'-triphosphate + 5'-deoxyadenosine + L-methionine + A + H(+). It functions in the pathway cofactor biosynthesis; molybdopterin biosynthesis. Catalyzes the cyclization of GTP to (8S)-3',8-cyclo-7,8-dihydroguanosine 5'-triphosphate. The chain is GTP 3',8-cyclase from Campylobacter lari (strain RM2100 / D67 / ATCC BAA-1060).